The chain runs to 155 residues: Vasotocin-neurophysin VT 1 (155 aa).

An N-terminal signal peptide occupies residues 1–20 (MPDSTIPLLCVLGLLALSSA). An intrachain disulfide couples cysteine 21 to cysteine 26. Glycine 29 is subject to Glycine amide. 7 disulfides stabilise this stretch: cysteine 41–cysteine 85, cysteine 44–cysteine 58, cysteine 52–cysteine 75, cysteine 59–cysteine 65, cysteine 92–cysteine 105, cysteine 99–cysteine 117, and cysteine 106–cysteine 111.

This sequence belongs to the vasopressin/oxytocin family. Seven disulfide bonds are present in neurophysin.

The protein resides in the secreted. Functionally, vasotocin is probably an antidiuretic hormone. This is Vasotocin-neurophysin VT 1 from Oncorhynchus masou (Cherry salmon).